We begin with the raw amino-acid sequence, 181 residues long: Adenylate kinase (181 aa).

Gly-10–Thr-15 serves as a coordination point for ATP. The NMP stretch occupies residues Ser-30–Val-59. Residues Thr-31, Arg-36, Lys-57–Val-59, Gly-85–Arg-88, and Gln-92 each bind AMP. Residues Ala-126–Asp-132 form an LID region. An ATP-binding site is contributed by Arg-127. AMP is bound by residues Arg-129 and Arg-140. Gly-166 contributes to the ATP binding site.

Belongs to the adenylate kinase family. Monomer.

The protein resides in the cytoplasm. It catalyses the reaction AMP + ATP = 2 ADP. It participates in purine metabolism; AMP biosynthesis via salvage pathway; AMP from ADP: step 1/1. In terms of biological role, catalyzes the reversible transfer of the terminal phosphate group between ATP and AMP. Plays an important role in cellular energy homeostasis and in adenine nucleotide metabolism. The protein is Adenylate kinase of Corynebacterium aurimucosum (strain ATCC 700975 / DSM 44827 / CIP 107346 / CN-1) (Corynebacterium nigricans).